A 146-amino-acid chain; its full sequence is UPF0742 protein C1348.03 (146 aa).

Residues 38–60 form a helical membrane-spanning segment; sequence LTVKYCLAVKLLIYLLYCWYIYS.

Belongs to the UPF0742 family.

The protein resides in the cytoplasm. It is found in the nucleus membrane. In Schizosaccharomyces pombe (strain 972 / ATCC 24843) (Fission yeast), this protein is UPF0742 protein C1348.03.